The chain runs to 344 residues: Methionine import ATP-binding protein MetN 1 (344 aa).

Residues 2–241 (IEIRNISQRF…PHHEVTRALI (240 aa)) enclose the ABC transporter domain. 38-45 (GRSGAGKS) serves as a coordination point for ATP.

This sequence belongs to the ABC transporter superfamily. Methionine importer (TC 3.A.1.24) family. The complex is composed of two ATP-binding proteins (MetN), two transmembrane proteins (MetI) and a solute-binding protein (MetQ).

It localises to the cell inner membrane. It catalyses the reaction L-methionine(out) + ATP + H2O = L-methionine(in) + ADP + phosphate + H(+). The catalysed reaction is D-methionine(out) + ATP + H2O = D-methionine(in) + ADP + phosphate + H(+). Part of the ABC transporter complex MetNIQ involved in methionine import. Responsible for energy coupling to the transport system. This chain is Methionine import ATP-binding protein MetN 1, found in Paraburkholderia xenovorans (strain LB400).